The sequence spans 205 residues: dITP/XTP pyrophosphatase (205 aa).

Substrate is bound at residue T16–K21. 2 residues coordinate Mg(2+): E48 and D77. D77 acts as the Proton acceptor in catalysis. Substrate-binding positions include S78, F162–D165, K185, and H190–R191.

Belongs to the HAM1 NTPase family. In terms of assembly, homodimer. Mg(2+) serves as cofactor.

It carries out the reaction XTP + H2O = XMP + diphosphate + H(+). It catalyses the reaction dITP + H2O = dIMP + diphosphate + H(+). The enzyme catalyses ITP + H2O = IMP + diphosphate + H(+). Functionally, pyrophosphatase that catalyzes the hydrolysis of nucleoside triphosphates to their monophosphate derivatives, with a high preference for the non-canonical purine nucleotides XTP (xanthosine triphosphate), dITP (deoxyinosine triphosphate) and ITP. Seems to function as a house-cleaning enzyme that removes non-canonical purine nucleotides from the nucleotide pool, thus preventing their incorporation into DNA/RNA and avoiding chromosomal lesions. This Erwinia tasmaniensis (strain DSM 17950 / CFBP 7177 / CIP 109463 / NCPPB 4357 / Et1/99) protein is dITP/XTP pyrophosphatase.